The sequence spans 697 residues: Potassium-transporting ATPase ATP-binding subunit (697 aa).

Transmembrane regions (helical) follow at residues proline 55–serine 75, serine 79–alanine 99, leucine 245–phenylalanine 265, and valine 271–isoleucine 291. The active-site 4-aspartylphosphate intermediate is aspartate 324. Residues aspartate 361, glutamate 365, phenylalanine 393 to serine 400, and lysine 412 each bind ATP. 2 residues coordinate Mg(2+): aspartate 535 and aspartate 539. A run of 3 helical transmembrane segments spans residues phenylalanine 605–methionine 625, alanine 633–methionine 653, and glycine 677–isoleucine 697.

Belongs to the cation transport ATPase (P-type) (TC 3.A.3) family. Type IA subfamily. In terms of assembly, the system is composed of three essential subunits: KdpA, KdpB and KdpC.

It localises to the cell membrane. The enzyme catalyses K(+)(out) + ATP + H2O = K(+)(in) + ADP + phosphate + H(+). Its function is as follows. Part of the high-affinity ATP-driven potassium transport (or Kdp) system, which catalyzes the hydrolysis of ATP coupled with the electrogenic transport of potassium into the cytoplasm. This subunit is responsible for energy coupling to the transport system and for the release of the potassium ions to the cytoplasm. The polypeptide is Potassium-transporting ATPase ATP-binding subunit (Bacillus anthracis (strain CDC 684 / NRRL 3495)).